The primary structure comprises 157 residues: Transcriptional repressor NrdR (157 aa).

A zinc finger lies at 3–34 (CPFCGHEDTQVKDSRPTDDGTAIRRRRSCTAC). Positions 49–139 (LIVVKTDQRR…VYRNFSDAGD (91 aa)) constitute an ATP-cone domain.

This sequence belongs to the NrdR family. It depends on Zn(2+) as a cofactor.

Its function is as follows. Negatively regulates transcription of bacterial ribonucleotide reductase nrd genes and operons by binding to NrdR-boxes. This chain is Transcriptional repressor NrdR, found in Granulibacter bethesdensis (strain ATCC BAA-1260 / CGDNIH1).